A 56-amino-acid polypeptide reads, in one-letter code: Turripeptide XIV-01 (56 aa).

An N-terminal signal peptide occupies residues 1–21; the sequence is MRFHVLLTVALLLTSLMSIEA. Residues 22 to 30 constitute a propeptide that is removed on maturation; it reads KPVNGAEME.

In terms of processing, contains 2 disulfide bonds. As to expression, expressed by the venom duct.

Its subcellular location is the secreted. This Gemmula speciosa (Splendid gem-turris) protein is Turripeptide XIV-01.